A 451-amino-acid chain; its full sequence is Trigger factor (451 aa).

The region spanning 165-250 (DDKLTIDFEG…LHQIQAREAL (86 aa)) is the PPIase FKBP-type domain.

The protein belongs to the FKBP-type PPIase family. Tig subfamily.

The protein localises to the cytoplasm. The enzyme catalyses [protein]-peptidylproline (omega=180) = [protein]-peptidylproline (omega=0). Functionally, involved in protein export. Acts as a chaperone by maintaining the newly synthesized protein in an open conformation. Functions as a peptidyl-prolyl cis-trans isomerase. The sequence is that of Trigger factor from Helicobacter pylori (strain HPAG1).